The primary structure comprises 282 residues: Succinate dehydrogenase [ubiquinone] iron-sulfur subunit, mitochondrial (282 aa).

Residues 1–30 (MAAVVGVSLKRGFSATALGRVGLQFQACRE) constitute a mitochondrion transit peptide. N6-acetyllysine is present on residues Lys-53 and Lys-57. Residues 56 to 135 (DKPRMQTYKV…VSKIYPLPHM (80 aa)) enclose the 2Fe-2S ferredoxin-type domain. 4 residues coordinate [2Fe-2S] cluster: Cys-95, Cys-100, Cys-103, and Cys-115. The tract at residues 148–220 (FYAQYKSIEP…PAVLMQAYRW (73 aa)) is interaction with SDHAF1. Residues 178-208 (DREKLDGLYECILCACCSTSCPSYWWNGDKY) form the 4Fe-4S ferredoxin-type domain. 3 residues coordinate [4Fe-4S] cluster: Cys-188, Cys-191, and Cys-194. Cys-198 serves as a coordination point for [3Fe-4S] cluster. Trp-203 provides a ligand contact to a ubiquinone. [3Fe-4S] cluster is bound by residues Cys-245 and Cys-251. Cys-255 contacts [4Fe-4S] cluster.

This sequence belongs to the succinate dehydrogenase/fumarate reductase iron-sulfur protein family. As to quaternary structure, component of complex II composed of four subunits: the flavoprotein (FP) SDHA, iron-sulfur protein (IP) SDHB, and a cytochrome b560 composed of SDHC and SDHD. Interacts with SDHAF1; the interaction is required for iron-sulfur cluster incorporation into SDHB. It depends on [2Fe-2S] cluster as a cofactor. [3Fe-4S] cluster is required as a cofactor. Requires [4Fe-4S] cluster as cofactor.

It localises to the mitochondrion inner membrane. It carries out the reaction a quinone + succinate = fumarate + a quinol. The catalysed reaction is (R)-malate + a quinone = enol-oxaloacetate + a quinol. It catalyses the reaction (S)-malate + a quinone = enol-oxaloacetate + a quinol. The protein operates within carbohydrate metabolism; tricarboxylic acid cycle; fumarate from succinate (eukaryal route): step 1/1. Its activity is regulated as follows. Enol-oxaloacetate inhibits the succinate dehydrogenase activity. Its function is as follows. Iron-sulfur protein (IP) subunit of the succinate dehydrogenase complex (mitochondrial respiratory chain complex II), responsible for transferring electrons from succinate to ubiquinone (coenzyme Q). SDH also oxidizes malate to the non-canonical enol form of oxaloacetate, enol-oxaloacetate. Enol-oxaloacetate, which is a potent inhibitor of the succinate dehydrogenase activity, is further isomerized into keto-oxaloacetate. In Rattus norvegicus (Rat), this protein is Succinate dehydrogenase [ubiquinone] iron-sulfur subunit, mitochondrial (Sdhb).